Consider the following 551-residue polypeptide: uncharacterized protein (551 aa).

4 disordered regions span residues 66-111, 130-165, 180-229, and 277-303; these read GNNK…STNL, PEAT…EKSN, AFNP…LSNL, and AFTS…VPLS. Serine 74 is subject to Phosphoserine. 2 stretches are compositionally biased toward polar residues: residues 92-111 and 143-156; these read GFSN…STNL and VVNT…GTQE. The segment covering 182–193 has biased composition (low complexity); that stretch reads NPSSVLPSNSSS. Residues 204–226 show a composition bias toward polar residues; the sequence is KETYQPNTFRRSPLKNDTGSVEL. Over residues 290–299 the composition is skewed to low complexity; that stretch reads TRPSSTRFPS.

This is an uncharacterized protein from Schizosaccharomyces pombe (strain 972 / ATCC 24843) (Fission yeast).